The following is a 312-amino-acid chain: Fasciclin-like arabinogalactan protein elcF (312 aa).

The N-terminal stretch at 1–16 (MKLFTLLLPALTSAHS) is a signal peptide. 2 consecutive FAS1 domains span residues 17–160 (LSTL…NASM) and 162–289 (LPHN…DKVL). N-linked (GlcNAc...) asparagine glycosylation is found at asparagine 48, asparagine 68, asparagine 113, asparagine 157, and asparagine 165.

Belongs to the fasciclin-like AGP family.

It participates in secondary metabolite biosynthesis. Its function is as follows. Fasciclin-like arabinogalactan protein; part of the gene cluster that mediates the biosynthesis of elsinochrome C, a perelyenequinone phytotoxin structurally similar to cercosporin. The first step of elsinochrome C biosynthesis is performed by the polyketide synthase elcA which catalyzes the formation of nor-toralactone. The starter unit acyltransferase (SAT) domain of elcA initiates polyketide extension by the selective utilization of acetyl-CoA, which is elongated to the heptaketide in the beta-ketoacyl synthase (KS) domain by successive condensations with six malonyl units introduced by the malonyl acyltransferase (MAT) domain. The product template (PT) domain catalyzes C4-C9 and C2-C11 aldol cyclizations and dehydrations to a trihydroxynaphthalene, which is thought to be delivered to the thioesterase (TE) domain for product release. The bifunctional enzyme elcB then methylates nor-toralactone to toralactone before conducting an unusual oxidative aromatic ring opening. The next step in perylenequinone biosynthesis is an O-methylation at the nascent OH-6 of the elcB product performed by the O-methyltransferase elcD. The oxidative coupling of the two monomeric naphthol units in perylenequinone biosynthesis is catalyzed by the FAD-dependent monooxygenase elcE and the multicopper oxidase elcG. ElcG might catalyze the first intermolecular coupling in a regio- and stereo-selective manner via a phenol radical coupling mechanism and the elcE could forge the second C-C bond intramolecularly via a hydride transfer mechanism. The fasciclin domain-containing protein elcF might also play a role duting this step. The last piece of the puzzle in the biosynthesis of elsinochrome C is the additional annulation by enolate coupling to afford the dihydrobenzo(ghi)perylenequinone system, catalyzed by the FAD-dependent monooxygenase elcH. This chain is Fasciclin-like arabinogalactan protein elcF, found in Phaeosphaeria nodorum (strain SN15 / ATCC MYA-4574 / FGSC 10173) (Glume blotch fungus).